A 26-amino-acid polypeptide reads, in one-letter code: Melittin (26 aa).

At Gly-1 the chain carries N-formylglycine; partial. Gln-26 is modified (glutamine amide).

This sequence belongs to the melittin family. In terms of assembly, monomer (in solution and for integration into membranes), homotetramer (in solution and potentially as a toroidal pore in membranes), and potenially homomultimer (as a toroidal pore in membranes). Expressed by the venom gland.

Its subcellular location is the secreted. The protein localises to the target cell membrane. Its function is as follows. Main toxin of bee venom with strong hemolytic activity and antimicrobial activity. It has enhancing effects on bee venom phospholipase A2 activity. This amphipathic toxin binds to negatively charged membrane surface and forms pore by inserting into lipid bilayers inducing the leakage of ions and molecules and the enhancement of permeability that ultimately leads to cell lysis. It acts as a voltage-gated pore with higher selectivity for anions over cations. The ion conductance has been shown to be voltage-dependent. Self-association of melittin in membranes is promoted by high ionic strength, but not by the presence of negatively charged lipids. In vivo, intradermal injection into healthy human volunteers produce sharp pain sensation and an inflammatory response. It produces pain by activating primary nociceptor cells directly and indirectly due to its ability to activate plasma membrane phospholipase A2 and its pore-forming activity. The chain is Melittin (MELT) from Apis florea (Dwarf honeybee).